Reading from the N-terminus, the 262-residue chain is Indole-3-glycerol phosphate synthase (262 aa).

It belongs to the TrpC family.

The enzyme catalyses 1-(2-carboxyphenylamino)-1-deoxy-D-ribulose 5-phosphate + H(+) = (1S,2R)-1-C-(indol-3-yl)glycerol 3-phosphate + CO2 + H2O. Its pathway is amino-acid biosynthesis; L-tryptophan biosynthesis; L-tryptophan from chorismate: step 4/5. The sequence is that of Indole-3-glycerol phosphate synthase from Staphylococcus epidermidis (strain ATCC 12228 / FDA PCI 1200).